Consider the following 412-residue polypeptide: Zinc finger protein 821 (412 aa).

Residues 26 to 83 form a disordered region; the sequence is RQAMMKTDFPGDLGSQRQAIQQLRDQDSSSSDSEGDEEETTQDEVSSHTSEEDGGVVK. The span at 58–67 shows a compositional bias: acidic residues; it reads SEGDEEETTQ. 2 consecutive C2H2-type zinc fingers follow at residues 116 to 140 and 150 to 172; these read ELCQ…VYQH and YMCP…LLIH. The stretch at 257-366 forms a coiled coil; it reads KWALRRQNEP…EKMDMMLRAQ (110 aa). Residues 278–319 are disordered; the sequence is RTAKKSRRDNETPEEREVRRMRDREAKRLQRMQETDEQRARR.

It belongs to the krueppel C2H2-type zinc-finger protein family.

The protein localises to the nucleus. May be involved in transcriptional regulation. The polypeptide is Zinc finger protein 821 (ZNF821) (Homo sapiens (Human)).